Reading from the N-terminus, the 91-residue chain is Elongation factor 1-beta (91 aa).

As to quaternary structure, homodimer.

In terms of biological role, promotes the exchange of GDP for GTP in EF-1-alpha/GDP, thus allowing the regeneration of EF-1-alpha/GTP that could then be used to form the ternary complex EF-1-alpha/GTP/AAtRNA. This chain is Elongation factor 1-beta (ef1b), found in Saccharolobus solfataricus (strain ATCC 35092 / DSM 1617 / JCM 11322 / P2) (Sulfolobus solfataricus).